Here is a 258-residue protein sequence, read N- to C-terminus: Mediator of RNA polymerase II transcription subunit 7 (258 aa).

Disordered regions lie at residues 1 to 39 (MLPG…PPPH) and 202 to 243 (EKET…PPSV). Residues 203–217 (KETEEDEEMKEDDEE) are compositionally biased toward acidic residues. Positions 220–229 (STSSSEGNQK) are enriched in polar residues.

The protein belongs to the Mediator complex subunit 7 family. Component of the Mediator complex.

It localises to the nucleus. Functionally, component of the Mediator complex, a coactivator involved in the regulated transcription of nearly all RNA polymerase II-dependent genes. Mediator functions as a bridge to convey information from gene-specific regulatory proteins to the basal RNA polymerase II transcription machinery. Mediator is recruited to promoters by direct interactions with regulatory proteins and serves as a scaffold for the assembly of a functional preinitiation complex with RNA polymerase II and the general transcription factors. The protein is Mediator of RNA polymerase II transcription subunit 7 (let-49) of Caenorhabditis briggsae.